We begin with the raw amino-acid sequence, 428 residues long: Flotillin-2a (428 aa).

Residues cysteine 4, cysteine 19, and cysteine 20 are each lipidated (S-palmitoyl cysteine).

It belongs to the band 7/mec-2 family. Flotillin subfamily. As to quaternary structure, heterooligomer; Heterooligomerizes with ic complex of flotillins 1 and 2. Post-translationally, palmitoylation may be required for the formation of higher order complexes and for neurite outgrowth in cultured neural stem cells.

Its subcellular location is the membrane. The protein localises to the endosome. Its function is as follows. May play a role in axon growth and regeneration. May be involved in epidermal cell adhesion and epidermal structure and function. In Danio rerio (Zebrafish), this protein is Flotillin-2a (flot2a).